The primary structure comprises 244 residues: Thiol S-methyltransferase TMT1B (244 aa).

The first 23 residues, 1–23, serve as a signal peptide directing secretion; it reads MDILVPLLQLLVLLLTLPLHLMA.

Belongs to the methyltransferase superfamily. As to expression, expressed in the liver.

The protein localises to the endoplasmic reticulum membrane. It localises to the lipid droplet. Its subcellular location is the microsome. It is found in the cytoplasm. The protein resides in the cytosol. The enzyme catalyses a thiol + S-adenosyl-L-methionine = a methyl thioether + S-adenosyl-L-homocysteine + H(+). Functionally, thiol S-methyltransferase that catalyzes the transfer of a methyl group from S-adenosyl-L-methionine to alkyl and phenolic thiol-containing acceptor substrates. Together with TMT1B accounts for most of S-thiol methylation activity in the endoplasmic reticulum of hepatocytes. Selectively methylates S-centered nucleophiles from metabolites such as hydrogen sulfide and dithiothreitol. The chain is Thiol S-methyltransferase TMT1B from Homo sapiens (Human).